The chain runs to 655 residues: MLNIIVVLLLLFFSNNVIDSRYISYSKPNYYKTNDKIPVYMNNVRSGLSIFDYYKYPFPKPSTIEYKQSFMSKLAGDLNSTSLYDEVSLHTSVDCIALGKPINYTLDDVNQLKYLIDKHFRINFFIDDLPIGELFKNNRLVEYNNSNSKSSEITSPPSSPSSSSSSSSSPSSSIEEEDDDDTENDHIYLGHPIGFKYNSKYYLYNHLIIIINSTSTKSDKGFYTIKSVNVEPYSCVDCKIDSGIGGVEISPELFDDDKIKQLTIQYTYSIRNHETTTTNSGKSFQSWSIYYVNQFKLSNIDIIMSFIIVLAVSACLAIILLKIFRKTNSKTYTQLSPDDGGWKSIYADVFRSPNNFMTFSIIIGFGVQIVASLFILMVFSVAGLTSIATPGGMAIASILIFSFTGIFNGYSSMRTYIMLGGTRKLYNSVITTTLIPFTILLLMFIGYFQVWSNKFTYGASIGTVFFILAMWLLVCVPCSLLSSYFVRTWPPAEYPVRINPIPRFIPTAKWYQNQYLHMILGGIIPFVIIFTDLSFFLSSWVLGEHYSYSLSFALTFILMIISIVETNMIIEYYQLSLENYNWWWRSLLGPMVTGLYTFIYFIYFGITRIETEGVGFYYFMFSLVFSILVSLFCSSIGFLGNLWFTKKIYSTLHFD.

The first 20 residues, 1 to 20 (MLNIIVVLLLLFFSNNVIDS), serve as a signal peptide directing secretion. The segment covering 146–173 (SNSKSSEITSPPSSPSSSSSSSSSPSSS) has biased composition (low complexity). The disordered stretch occupies residues 146 to 185 (SNSKSSEITSPPSSPSSSSSSSSSPSSSIEEEDDDDTEND). The span at 174 to 183 (IEEEDDDDTE) shows a compositional bias: acidic residues. 9 helical membrane-spanning segments follow: residues 300 to 320 (IDII…AIIL), 359 to 379 (FSII…LMVF), 387 to 407 (IATP…TGIF), 428 to 448 (SVIT…IGYF), 461 to 481 (IGTV…CSLL), 518 to 538 (MILG…FFLS), 550 to 570 (LSFA…NMII), 587 to 607 (LLGP…FGIT), and 619 to 639 (FMFS…IGFL).

It belongs to the nonaspanin (TM9SF) (TC 9.A.2) family.

Its subcellular location is the membrane. This Dictyostelium discoideum (Social amoeba) protein is Putative phagocytic receptor 1c (phg1c).